The following is a 178-amino-acid chain: Large ribosomal subunit protein uL6 (178 aa).

Belongs to the universal ribosomal protein uL6 family. Part of the 50S ribosomal subunit.

Its function is as follows. This protein binds to the 23S rRNA, and is important in its secondary structure. It is located near the subunit interface in the base of the L7/L12 stalk, and near the tRNA binding site of the peptidyltransferase center. The protein is Large ribosomal subunit protein uL6 of Streptococcus agalactiae serotype Ia (strain ATCC 27591 / A909 / CDC SS700).